Reading from the N-terminus, the 115-residue chain is WLMIVEQKCRVIVMLAKCFEAGKKKCQKYWSDSKETKKFGRVKVFNAEEVKYCGFLRRKFLIESVDEGITMKVFQYQYINWPDHCVPNTTSNLVRMHKYVIQCFEETGSDAPMVV.

In terms of domain architecture, Tyrosine-protein phosphatase spans 1 to 115; it reads WLMIVEQKCR…ETGSDAPMVV (115 aa). A substrate-binding site is contributed by Asp83.

The protein belongs to the protein-tyrosine phosphatase family.

It catalyses the reaction O-phospho-L-tyrosyl-[protein] + H2O = L-tyrosyl-[protein] + phosphate. This is Tyrosine-protein phosphatase 19 (STY-19) from Styela plicata (Wrinkled sea squirt).